The sequence spans 343 residues: Anthranilate phosphoribosyltransferase (343 aa).

Residues glycine 77, 80–81 (GD), threonine 85, 87–90 (NVST), 105–113 (KHGNRSSSG), and serine 117 contribute to the 5-phospho-alpha-D-ribose 1-diphosphate site. Glycine 77 lines the anthranilate pocket. Mg(2+) is bound at residue serine 89. Asparagine 108 contacts anthranilate. Arginine 163 serves as a coordination point for anthranilate. Residues aspartate 222 and glutamate 223 each contribute to the Mg(2+) site.

It belongs to the anthranilate phosphoribosyltransferase family. As to quaternary structure, homodimer. Requires Mg(2+) as cofactor.

The catalysed reaction is N-(5-phospho-beta-D-ribosyl)anthranilate + diphosphate = 5-phospho-alpha-D-ribose 1-diphosphate + anthranilate. Its pathway is amino-acid biosynthesis; L-tryptophan biosynthesis; L-tryptophan from chorismate: step 2/5. Catalyzes the transfer of the phosphoribosyl group of 5-phosphorylribose-1-pyrophosphate (PRPP) to anthranilate to yield N-(5'-phosphoribosyl)-anthranilate (PRA). The protein is Anthranilate phosphoribosyltransferase of Cenarchaeum symbiosum (strain A).